The primary structure comprises 114 residues: Reprimo-like protein (114 aa).

The helical transmembrane segment at 61–81 threads the bilayer; that stretch reads VVQIAVLCVLSLTVMFGIFFL.

The protein belongs to the reprimo family.

It localises to the membrane. This is Reprimo-like protein (rprml) from Danio rerio (Zebrafish).